The primary structure comprises 558 residues: NAD(P)H-quinone oxidoreductase chain 4 (558 aa).

Transmembrane regions (helical) follow at residues F25–I45, W56–G76, L111–F131, P133–V153, L157–W177, F189–F209, G230–V250, T264–L284, F298–F318, I327–S347, A353–A373, I395–V417, I438–M458, and I485–M505.

It belongs to the complex I subunit 4 family.

It is found in the cellular thylakoid membrane. It catalyses the reaction a plastoquinone + NADH + (n+1) H(+)(in) = a plastoquinol + NAD(+) + n H(+)(out). The catalysed reaction is a plastoquinone + NADPH + (n+1) H(+)(in) = a plastoquinol + NADP(+) + n H(+)(out). In terms of biological role, NDH-1 shuttles electrons from NAD(P)H, via FMN and iron-sulfur (Fe-S) centers, to quinones in the respiratory chain. The immediate electron acceptor for the enzyme in this species is believed to be plastoquinone. Couples the redox reaction to proton translocation (for every two electrons transferred, four hydrogen ions are translocated across the cytoplasmic membrane), and thus conserves the redox energy in a proton gradient. The sequence is that of NAD(P)H-quinone oxidoreductase chain 4 from Prochlorococcus marinus (strain MIT 9211).